A 377-amino-acid chain; its full sequence is Dihydroorotate dehydrogenase (quinone) (377 aa).

FMN is bound by residues 68–72 (AGFDK) and Thr-92. Lys-72 is a binding site for substrate. Position 117 to 121 (117 to 121 (NRMGF)) interacts with substrate. The FMN site is built by Asn-149 and Asn-182. Residue Asn-182 coordinates substrate. Ser-185 (nucleophile) is an active-site residue. Residue Asn-187 coordinates substrate. Residues Lys-224 and Thr-252 each coordinate FMN. 253–254 (NT) contributes to the substrate binding site. FMN contacts are provided by residues Gly-278, Gly-307, and 328–329 (YT).

This sequence belongs to the dihydroorotate dehydrogenase family. Type 2 subfamily. In terms of assembly, monomer. FMN serves as cofactor.

Its subcellular location is the cell membrane. It carries out the reaction (S)-dihydroorotate + a quinone = orotate + a quinol. Its pathway is pyrimidine metabolism; UMP biosynthesis via de novo pathway; orotate from (S)-dihydroorotate (quinone route): step 1/1. Catalyzes the conversion of dihydroorotate to orotate with quinone as electron acceptor. This Thermobifida fusca (strain YX) protein is Dihydroorotate dehydrogenase (quinone).